The chain runs to 255 residues: Trypsin alpha-4 (255 aa).

The N-terminal stretch at 1–16 (MLKFVVLLCAISCALG) is a signal peptide. A propeptide spans 17-30 (AAVPEGMVPQLDGR) (activation peptide). The 223-residue stretch at 31–253 (IVGGVATTIS…LRTWVVSAAS (223 aa)) folds into the Peptidase S1 domain. Residues C56 and C72 are joined by a disulfide bond. Residues H71 and D116 each act as charge relay system in the active site. Disulfide bonds link C179/C196 and C205/C229. Catalysis depends on S209, which acts as the Charge relay system.

Belongs to the peptidase S1 family.

It localises to the secreted. It is found in the extracellular space. The catalysed reaction is Preferential cleavage: Arg-|-Xaa, Lys-|-Xaa.. In Lucilia cuprina (Green bottle fly), this protein is Trypsin alpha-4.